We begin with the raw amino-acid sequence, 149 residues long: D-aminoacyl-tRNA deacylase (149 aa).

A Gly-cisPro motif, important for rejection of L-amino acids motif is present at residues 137–138 (GP).

The protein belongs to the DTD family. Homodimer.

It localises to the cytoplasm. The catalysed reaction is glycyl-tRNA(Ala) + H2O = tRNA(Ala) + glycine + H(+). It carries out the reaction a D-aminoacyl-tRNA + H2O = a tRNA + a D-alpha-amino acid + H(+). In terms of biological role, an aminoacyl-tRNA editing enzyme that deacylates mischarged D-aminoacyl-tRNAs. Also deacylates mischarged glycyl-tRNA(Ala), protecting cells against glycine mischarging by AlaRS. Acts via tRNA-based rather than protein-based catalysis; rejects L-amino acids rather than detecting D-amino acids in the active site. By recycling D-aminoacyl-tRNA to D-amino acids and free tRNA molecules, this enzyme counteracts the toxicity associated with the formation of D-aminoacyl-tRNA entities in vivo and helps enforce protein L-homochirality. This Clostridium novyi (strain NT) protein is D-aminoacyl-tRNA deacylase.